Consider the following 83-residue polypeptide: Small ribosomal subunit protein bS18 (83 aa).

The protein belongs to the bacterial ribosomal protein bS18 family. Part of the 30S ribosomal subunit. Forms a tight heterodimer with protein bS6.

In terms of biological role, binds as a heterodimer with protein bS6 to the central domain of the 16S rRNA, where it helps stabilize the platform of the 30S subunit. The polypeptide is Small ribosomal subunit protein bS18 (Tropheryma whipplei (strain TW08/27) (Whipple's bacillus)).